The primary structure comprises 321 residues: Glucokinase (321 aa).

8-13 (GDVGGT) serves as a coordination point for ATP.

The protein belongs to the bacterial glucokinase family.

It localises to the cytoplasm. It catalyses the reaction D-glucose + ATP = D-glucose 6-phosphate + ADP + H(+). The protein is Glucokinase of Pectobacterium atrosepticum (strain SCRI 1043 / ATCC BAA-672) (Erwinia carotovora subsp. atroseptica).